The following is a 148-amino-acid chain: Endoribonuclease YbeY (148 aa).

Residues histidine 105, histidine 109, and aspartate 115 each coordinate Zn(2+).

It belongs to the endoribonuclease YbeY family. It depends on Zn(2+) as a cofactor.

It localises to the cytoplasm. Single strand-specific metallo-endoribonuclease involved in late-stage 70S ribosome quality control and in maturation of the 3' terminus of the 16S rRNA. This is Endoribonuclease YbeY from Chlorobium phaeovibrioides (strain DSM 265 / 1930) (Prosthecochloris vibrioformis (strain DSM 265)).